We begin with the raw amino-acid sequence, 222 residues long: Peptide methionine sulfoxide reductase MsrA (222 aa).

Cys-54 is a catalytic residue.

It belongs to the MsrA Met sulfoxide reductase family.

It carries out the reaction L-methionyl-[protein] + [thioredoxin]-disulfide + H2O = L-methionyl-(S)-S-oxide-[protein] + [thioredoxin]-dithiol. It catalyses the reaction [thioredoxin]-disulfide + L-methionine + H2O = L-methionine (S)-S-oxide + [thioredoxin]-dithiol. Functionally, has an important function as a repair enzyme for proteins that have been inactivated by oxidation. Catalyzes the reversible oxidation-reduction of methionine sulfoxide in proteins to methionine. The polypeptide is Peptide methionine sulfoxide reductase MsrA (Methylococcus capsulatus (strain ATCC 33009 / NCIMB 11132 / Bath)).